Here is a 678-residue protein sequence, read N- to C-terminus: Vacuolar protein sorting-associated protein 1 (678 aa).

In terms of domain architecture, Dynamin-type G spans 24–311; that stretch reads LIDLPQITVV…LMHHIRNTLP (288 aa). The interval 34 to 41 is G1 motif; it reads RSQSSGKS. 34–41 is a binding site for GTP; that stretch reads RSQSSGKS. A G2 motif region spans residues 60 to 62; that stretch reads VTR. A disordered region spans residues 71-96; sequence NRPSASGKNEETTTDSDGKDQNNSSE. Over residues 78-90 the composition is skewed to basic and acidic residues; that stretch reads KNEETTTDSDGKD. The G3 motif stretch occupies residues 153-156; the sequence is DLPG. GTP is bound by residues 153–157 and 222–225; these read DLPGL and TKVD. The tract at residues 222-225 is G4 motif; the sequence is TKVD. The interval 252-255 is G5 motif; that stretch reads INRG. In terms of domain architecture, GED spans 592 to 678; sequence TEVIKLLIMS…LQASEIVSNV (87 aa).

It belongs to the TRAFAC class dynamin-like GTPase superfamily. Dynamin/Fzo/YdjA family.

The chain is Vacuolar protein sorting-associated protein 1 (vps1) from Schizosaccharomyces pombe (strain 972 / ATCC 24843) (Fission yeast).